We begin with the raw amino-acid sequence, 282 residues long: Predicted GPI-anchored protein 23 (282 aa).

Residues Met1–Ala18 form the signal peptide. A disordered region spans residues Gly163–Met264. Asn180, Asn192, and Asn257 each carry an N-linked (GlcNAc...) asparagine glycan. A compositionally biased stretch (gly residues) spans Gly186–Ser216. Residues Leu236 to Met264 show a composition bias toward low complexity. A lipid anchor (GPI-anchor amidated serine) is attached at Ser259. Residues Ser260–Ile282 constitute a propeptide, removed in mature form.

It is found in the cell membrane. In terms of biological role, probable cell surface protein involved in the process of adhesion and early events of invasion. The polypeptide is Predicted GPI-anchored protein 23 (PGA23) (Candida albicans (strain SC5314 / ATCC MYA-2876) (Yeast)).